Consider the following 491-residue polypeptide: MPWCKQGTTDKLVREFLRTGAAARNKMMKNWGVIGGIAAAMAAGVYVLWGPISDRRKKRKGMVPGLLNLGNTCFMNSLLQGLAACPSFIRWLEDFTSQNSADRERTERETQLSRSLMQLLKALSSHDPGEDDVLDAGGLLEALRLYRWHISSFEEQDAHELFHVLTSSLEEEQERQPRVAHLFDMQTLEKSVESKEKNISCRSGGPLHPIPSLWRTRHPFHGRLTSYMACKRCEQQSPVHYDSFDSLSLSIPSIQWGRPVTLDQCLQHFISSETIKEVECENCTKQQAGELVNGEVLESQRTTFVKQLKLGKRLTWSKEGSPIKRQEHVQFTEYLSLDRYKHCSAAQSQQKTSRTNKAKASADPKDKAIANGVDSEHCNNNKPQSNGTFPSVFLHSPGLSSQLNLTYDYSTSEYLFRLTAVLVHHGDMHSGHFITYRRCPAAPRGTSPFSSQWLWVSDDSVRKASLQEVLSSSAYLLFYERMQRPGLRVEE.

Residues 1-31 (MPWCKQGTTDKLVREFLRTGAAARNKMMKNW) lie on the Mitochondrial intermembrane side of the membrane. A helical membrane pass occupies residues 32–52 (GVIGGIAAAMAAGVYVLWGPI). Residues 53 to 491 (SDRRKKRKGM…MQRPGLRVEE (439 aa)) are Cytoplasmic-facing. A USP domain is found at 64 to 482 (PGLLNLGNTC…SAYLLFYERM (419 aa)). The active-site Nucleophile is Cys-73. A compositionally biased stretch (polar residues) spans 346-355 (AQSQQKTSRT). The tract at residues 346–365 (AQSQQKTSRTNKAKASADPK) is disordered. His-432 functions as the Proton acceptor in the catalytic mechanism.

Belongs to the peptidase C19 family.

Its subcellular location is the mitochondrion outer membrane. It catalyses the reaction Thiol-dependent hydrolysis of ester, thioester, amide, peptide and isopeptide bonds formed by the C-terminal Gly of ubiquitin (a 76-residue protein attached to proteins as an intracellular targeting signal).. Deubiquitinating enzyme that acts as a key inhibitor of mitophagy by counteracting the action of parkin (PRKN). The polypeptide is Ubiquitin carboxyl-terminal hydrolase 30 (usp30) (Danio rerio (Zebrafish)).